Reading from the N-terminus, the 853-residue chain is DNA topoisomerase 1 (853 aa).

The 134-residue stretch at 3–136 (KSLVIVESPV…KFRRVVFNEI (134 aa)) folds into the Toprim domain. Mg(2+) contacts are provided by glutamate 9 and aspartate 105. The Topo IA-type catalytic domain occupies 152 to 565 (NMNRVYSQQA…SFFDNFSQQL (414 aa)). The segment at 186–191 (SAGRVQ) is interaction with DNA. Tyrosine 313 acts as the O-(5'-phospho-DNA)-tyrosine intermediate in catalysis. 3 C4-type zinc fingers span residues 589 to 621 (CSLC…EKRC), 649 to 676 (CKKC…NPSC), and 699 to 724 (CEKC…NDTC).

It belongs to the type IA topoisomerase family. Monomer. Mg(2+) serves as cofactor.

It catalyses the reaction ATP-independent breakage of single-stranded DNA, followed by passage and rejoining.. Releases the supercoiling and torsional tension of DNA, which is introduced during the DNA replication and transcription, by transiently cleaving and rejoining one strand of the DNA duplex. Introduces a single-strand break via transesterification at a target site in duplex DNA. The scissile phosphodiester is attacked by the catalytic tyrosine of the enzyme, resulting in the formation of a DNA-(5'-phosphotyrosyl)-enzyme intermediate and the expulsion of a 3'-OH DNA strand. The free DNA strand then undergoes passage around the unbroken strand, thus removing DNA supercoils. Finally, in the religation step, the DNA 3'-OH attacks the covalent intermediate to expel the active-site tyrosine and restore the DNA phosphodiester backbone. In Buchnera aphidicola subsp. Schizaphis graminum (strain Sg), this protein is DNA topoisomerase 1.